The sequence spans 2359 residues: Neuron navigator 3 (2359 aa).

The Calponin-homology (CH) domain occupies 77–184; sequence IEDSKIYTDW…LFFSLSRYKQ (108 aa). Composition is skewed to polar residues over residues 204–226, 233–243, 257–279, and 300–317; these read THTA…SSLT, SKHSGIATSQK, ASSS…FNSI, and QPSS…TSGQ. 2 disordered regions span residues 204-623 and 641-660; these read THTA…QQQH and ENEG…TKMD. Positions 318-329 are enriched in low complexity; sequence PPASAIPSPSAS. Residues 335–352 show a composition bias toward polar residues; sequence KSMNVKHSATSTMLTVKQ. Low complexity-rich tracts occupy residues 353–363 and 427–439; these read PSPATSPTPSS and NSGL…TNSS. The span at 465-491 shows a compositional bias: basic and acidic residues; the sequence is PKEKEEKTRDKNKACAEKSGKEEKDQV. The segment covering 522-536 has biased composition (low complexity); the sequence is IPSSSGIPKPGSKVP. Positions 592–623 are enriched in polar residues; sequence ASPSSSCVMQVTHSSGQSPGNGAVQLPQQQQH. A coiled-coil region spans residues 680–708; that stretch reads EARRMRTVKNIADLRQNLEETMSSLRGTQ. 4 disordered regions span residues 878–1315, 1413–1472, 1653–1758, and 1829–1855; these read ADSW…SPLF, LSES…AMSS, GALN…KPSQ, and ETGN…SRQS. Low complexity-rich tracts occupy residues 883–896 and 904–916; these read DSSS…DTLD and NTTS…SNIT. Residues 917–926 show a composition bias toward polar residues; sequence VPSRKNTQLK. Residues 943–960 are compositionally biased toward basic and acidic residues; it reads EELKKAEGDCDSHGDGAA. Composition is skewed to polar residues over residues 978–989 and 997–1013; these read QKASLSVSQTGS and QGGT…TSAL. The segment covering 1017–1029 has biased composition (basic and acidic residues); the sequence is GKTDDAKASEKGK. Composition is skewed to low complexity over residues 1077 to 1095 and 1160 to 1173; these read GAST…GSAT and SSTS…SSKS. The segment covering 1190–1199 has biased composition (polar residues); it reads GRSSPVTVNQ. 3 stretches are compositionally biased toward low complexity: residues 1209–1229, 1256–1266, and 1274–1285; these read VSDS…TSAS, GAKAGGKSASA, and SSSVVLSPSTSL. Over residues 1299-1308 the composition is skewed to gly residues; it reads GSMGSAGGLS. Positions 1439 to 1448 are enriched in basic and acidic residues; the sequence is NQEEGKEWLR. Positions 1449-1461 are enriched in polar residues; it reads SHSTGGLQDTGNQ. S1462 and S1466 each carry phosphoserine. Residues 1462 to 1472 show a composition bias toward low complexity; sequence SPLVSPSAMSS. Positions 1565–1656 form a coiled coil; that stretch reads AEEKAHSEQI…AQAAIQGALN (92 aa). 2 stretches are compositionally biased toward low complexity: residues 1675–1692 and 1749–1758; these read SVSS…GSGN and SGSSSMKPSQ. The stretch at 1768–1835 forms a coiled coil; that stretch reads EAEAEIILQL…LKAETGNTAK (68 aa). Residues 1841 to 1855 are compositionally biased toward low complexity; the sequence is SDSSSTASSSSSRQS.

This sequence belongs to the Nav/unc-53 family. In terms of tissue distribution, present in neurons from central and peripheral nervous systems (at protein level). Highly expressed in brain cortex, midbrain, cerebellum and hippocampus.

The protein resides in the nucleus outer membrane. In terms of biological role, plays a role in cell migration. May be involved in neuron regeneration. May regulate IL2 production by T-cells. The polypeptide is Neuron navigator 3 (Nav3) (Mus musculus (Mouse)).